We begin with the raw amino-acid sequence, 341 residues long: Endoglucanase 1 (341 aa).

A signal peptide spans 1-16 (MKTATLLAALSVLAGA). Positions 17–30 (LAAPLAGDSALHRR) are excised as a propeptide. E166 acts as the Proton donor in catalysis. Catalysis depends on E275, which acts as the Nucleophile.

The protein belongs to the glycosyl hydrolase 5 (cellulase A) family.

It carries out the reaction Endohydrolysis of (1-&gt;4)-beta-D-glucosidic linkages in cellulose, lichenin and cereal beta-D-glucans.. Its function is as follows. Has endoglucanase activity on carboxymethyl-cellulose (CMC). In Saitozyma flava (Cryptococcus flavus), this protein is Endoglucanase 1 (CMC1).